The chain runs to 43 residues: Antimicrobial protein PcfHb (43 aa).

As to quaternary structure, possible monomer. Expressed in mucus-secreting tissues.

The protein resides in the secreted. Shows antimicrobial activity against M.luteus (MIC=4 uM) and E.coli (MIC=12 uM), as well as against the yeast C.tropicalis (MIC=4 uM). Shows a pro-inflammatory effect, since the topical application of the protein induces an increase of cellular recruitment characterized by an increase in the number of leukocyte rolling. Does not show hemolytic activity on human erythrocytes (at doses up to 100 uM). The chain is Antimicrobial protein PcfHb from Potamotrygon cf. henlei (Freshwater stingray).